Here is a 1102-residue protein sequence, read N- to C-terminus: Probable leucine-rich repeat receptor-like protein kinase At5g63930 (1102 aa).

The signal sequence occupies residues 1–26 (MVKEMMKLAVFFISLLLILLISETTG). The Extracellular portion of the chain corresponds to 27 to 737 (LNLEGQYLLE…GKPGGMRSSK (711 aa)). N-linked (GlcNAc...) asparagine glycans are attached at residues asparagine 54, asparagine 68, asparagine 79, and asparagine 119. LRR repeat units follow at residues 72–96 (DPEV…IGGL), 97–120 (VHLK…IGNC), 122–144 (SLEI…IGKL), 145–170 (VSLE…NLLS), 172–192 (SQLV…IGNL), 193–216 (KRLT…IGGC), 217–241 (ESLV…GMLK), 243–264 (LSQV…ISNC), 265–288 (TSLE…LGDL), 289–312 (QSLE…IGNL), 314–336 (YAIE…LGNI), 337–360 (EGLE…LSTL), 361–383 (KNLS…GFQY), 385–408 (RGLF…LGWY), 409–432 (SDLW…LCLH), 433–456 (SNMI…ITTC), 458–480 (TLVQ…LCKQ), 481–504 (VNVT…VGNC), 505–528 (SALQ…IGML), 529–552 (SQLG…IFNC), 554–576 (MLQR…VGSL), 577–602 (YQLE…NLSR), 604–624 (TELQ…LGSL), 625–649 (TGLQ…LSNL), 651–672 (MLEF…SFAN), and 674–700 (SSLL…SMSS). Asparagine 180 carries an N-linked (GlcNAc...) asparagine glycan. N-linked (GlcNAc...) asparagine glycosylation occurs at asparagine 263. N-linked (GlcNAc...) asparagine glycosylation is found at asparagine 302 and asparagine 311. Asparagine 362 is a glycosylation site (N-linked (GlcNAc...) asparagine). N-linked (GlcNAc...) asparagine glycosylation occurs at asparagine 444. 2 N-linked (GlcNAc...) asparagine glycosylation sites follow: asparagine 482 and asparagine 503. Asparagine 535, asparagine 564, asparagine 588, asparagine 599, asparagine 614, asparagine 632, asparagine 661, asparagine 672, asparagine 680, and asparagine 695 each carry an N-linked (GlcNAc...) asparagine glycan. A helical membrane pass occupies residues 738–758 (IIAITAAVIGGVSLMLIALIV). Residues 759 to 1102 (YLMRRPVRTV…TEELTQTTTP (344 aa)) are Cytoplasmic-facing. A phosphothreonine mark is found at threonine 793 and threonine 801. Residues 804–1091 (FDESFVVGRG…ERSEGEQEHL (288 aa)) form the Protein kinase domain. ATP is bound by residues 810 to 818 (VGRGACGTV) and lysine 832. Phosphotyrosine occurs at positions 882 and 919. Aspartate 932 functions as the Proton acceptor in the catalytic mechanism. Serine 966 carries the post-translational modification Phosphoserine. Phosphotyrosine is present on residues tyrosine 974 and tyrosine 981. Threonine 982 bears the Phosphothreonine mark.

Belongs to the protein kinase superfamily. Ser/Thr protein kinase family.

It localises to the cell membrane. It carries out the reaction L-seryl-[protein] + ATP = O-phospho-L-seryl-[protein] + ADP + H(+). It catalyses the reaction L-threonyl-[protein] + ATP = O-phospho-L-threonyl-[protein] + ADP + H(+). The polypeptide is Probable leucine-rich repeat receptor-like protein kinase At5g63930 (Arabidopsis thaliana (Mouse-ear cress)).